Here is a 298-residue protein sequence, read N- to C-terminus: Arginine/serine-rich protein 1 (298 aa).

Residues 1-135 (MSSAAMSKYV…SRSRSRGRSQ (135 aa)) are disordered. The residue at position 17 (serine 17) is a Phosphoserine. The span at 23 to 36 (SPSTSGSGRSSRLS) shows a compositional bias: low complexity. Over residues 60-105 (SRSHSRPRRSRRSRSRSRRRHQRKYRRYSRSYSRSRSRSRSHRYHR) the composition is skewed to basic residues. Serine 118 and serine 120 each carry phosphoserine. Basic residues predominate over residues 124-135 (SRSRSRSRGRSQ). At arginine 145 the chain carries Omega-N-methylarginine. Disordered stretches follow at residues 161 to 181 (RPRWRERSRTRSRSRSRTPFR) and 218 to 298 (ASQG…WIPV). Polar residues predominate over residues 219-228 (SQGTAVSSSG). Residues 230–246 (KVEHSEKQTEDATKNTS) are compositionally biased toward basic and acidic residues. Polar residues predominate over residues 247 to 271 (EKSSTQRNIAFSSNNSVAKPLQKTT). Basic and acidic residues predominate over residues 274–289 (AVEEKSSGSPKIDKKK). Residue serine 282 is modified to Phosphoserine.

It belongs to the RSRP family. Post-translationally, phosphorylated. Phosphorylation at Ser-118 and Ser-120 mediates the interaction with spliceosome proteins.

It is found in the nucleus. Functionally, probably acts as a spliceosomal factor that contributes to spliceosome assembly and regulates the isoform switching of proteins such as PARP6. The sequence is that of Arginine/serine-rich protein 1 (Rsrp1) from Mus musculus (Mouse).